The primary structure comprises 259 residues: MATIKEIKEFLVTVKELESPIFLELEKDNRSGVQKEISKRKRAIQAELDENLRLESMLSYEKELYKQGLTLIVGIDEVGRGPLAGPVVAAAVILPKNCKIKGLNDSKKIPKKKHLEIFQAVQDQALSIGIGIIDNQVIDQVNIYEATKLAMQEAISQLSPQPEHLLIDAMKLDLPISQTSIIKGDANSLSIAAASIVAKVTRDELMKEYDQQFPGYDFATNAGYGTAKHLEGLTKLGVTPIHRTSFEPVKSLVLGKKES.

Residues 70–258 (TLIVGIDEVG…VKSLVLGKKE (189 aa)) enclose the RNase H type-2 domain. Asp76, Glu77, and Asp168 together coordinate a divalent metal cation.

Belongs to the RNase HII family. Mn(2+) is required as a cofactor. Mg(2+) serves as cofactor.

It is found in the cytoplasm. It catalyses the reaction Endonucleolytic cleavage to 5'-phosphomonoester.. Functionally, endonuclease that specifically degrades the RNA of RNA-DNA hybrids. The polypeptide is Ribonuclease HII (Streptococcus pneumoniae (strain ATCC 700669 / Spain 23F-1)).